The sequence spans 616 residues: Chaperone protein HscA (616 aa).

It belongs to the heat shock protein 70 family.

Chaperone involved in the maturation of iron-sulfur cluster-containing proteins. Has a low intrinsic ATPase activity which is markedly stimulated by HscB. Involved in the maturation of IscU. The polypeptide is Chaperone protein HscA (Escherichia coli O6:H1 (strain CFT073 / ATCC 700928 / UPEC)).